The chain runs to 434 residues: Putative ZDHHC-type palmitoyltransferase 1 (434 aa).

The next 2 helical transmembrane spans lie at 25-45 (AYFI…LIFV) and 53-73 (ITAA…IFLI). The DHHC domain maps to 115–165 (KWCETCCLYRPPRANHCGICNNCVERFDHHCPWVGNCIGRRNYQTFLYFLY). Catalysis depends on Cys-145, which acts as the S-palmitoyl cysteine intermediate. Residues 160–180 (FLYFLYSLGFLCIWIMGFCVA) traverse the membrane as a helical segment. Asn-207, Asn-216, Asn-274, Asn-346, Asn-362, Asn-373, Asn-381, Asn-387, and Asn-393 each carry an N-linked (GlcNAc...) asparagine glycan. Positions 262-330 (TIPTPNNING…ISPPQMLQRQ (69 aa)) are disordered. Low complexity predominate over residues 267–316 (NNINGNNNNSINNNNNNNNNNNNNNNNNNNNNNNNNNINNGNSGGTTNNG). The segment at 365-434 (TISEDKPKNL…SLNHELQVNV (70 aa)) is disordered. Low complexity predominate over residues 373–387 (NLSNSNNNNNTNNKN). The segment covering 409-419 (DDFKSDNDKEI) has biased composition (basic and acidic residues). The N-linked (GlcNAc...) asparagine glycan is linked to Asn-420. Over residues 420 to 434 (NSSSLSLNHELQVNV) the composition is skewed to polar residues.

This sequence belongs to the DHHC palmitoyltransferase family.

It localises to the membrane. It catalyses the reaction L-cysteinyl-[protein] + hexadecanoyl-CoA = S-hexadecanoyl-L-cysteinyl-[protein] + CoA. The sequence is that of Putative ZDHHC-type palmitoyltransferase 1 from Dictyostelium discoideum (Social amoeba).